Here is a 27-residue protein sequence, read N- to C-terminus: Secretin (27 aa).

L27 carries the post-translational modification Leucine amide.

The protein belongs to the glucagon family.

It is found in the secreted. Its function is as follows. Hormone involved in different processes, such as regulation of the pH of the duodenal content, food intake and water homeostasis. Exerts its biological effects by binding to secretin receptor (SCTR), a G-protein coupled receptor expressed in the basolateral domain of several cells. Acts as a key gastrointestinal hormone by regulating the pH of the duodenal content. Secreted by S cells of the duodenum in the crypts of Lieberkuehn and regulates the pH of the duodenum by (1) inhibiting the secretion of gastric acid from the parietal cells of the stomach and (2) stimulating the production of bicarbonate (NaHCO(3)) from the ductal cells of the pancreas. Production of bicarbonate is essential to neutralize the pH and ensure no damage is done to the small intestine by the gastric acid. In addition to regulating the pH of the duodenal content, plays a central role in diet induced thermogenesis: acts as a non-sympathetic brown fat (BAT) activator mediating prandial thermogenesis, which consequentially induces satiation. Mechanistically, secretin released by the gut after a meal binds to secretin receptor (SCTR) in brown adipocytes, activating brown fat thermogenesis by stimulating lipolysis, which is sensed in the brain and promotes satiation. Also able to stimulate lipolysis in white adipocytes. Also plays an important role in cellular osmoregulation: released into the systemic circulation in response to hyperosmolality and acts at different levels in the hypothalamus, pituitary and kidney to regulate water homeostasis. Also plays a role in the central nervous system, possibly by acting as a neuropeptide hormone: required for hippocampal synaptic function and neural progenitor cells maintenance. In Oryctolagus cuniculus (Rabbit), this protein is Secretin.